Reading from the N-terminus, the 195-residue chain is Imidazoleglycerol-phosphate dehydratase (195 aa).

This sequence belongs to the imidazoleglycerol-phosphate dehydratase family.

The protein localises to the cytoplasm. The enzyme catalyses D-erythro-1-(imidazol-4-yl)glycerol 3-phosphate = 3-(imidazol-4-yl)-2-oxopropyl phosphate + H2O. The protein operates within amino-acid biosynthesis; L-histidine biosynthesis; L-histidine from 5-phospho-alpha-D-ribose 1-diphosphate: step 6/9. In Geobacillus thermodenitrificans (strain NG80-2), this protein is Imidazoleglycerol-phosphate dehydratase.